A 131-amino-acid polypeptide reads, in one-letter code: Profilin-2 (131 aa).

The protein belongs to the profilin family. In terms of assembly, occurs in many kinds of cells as a complex with monomeric actin in a 1:1 ratio. Expressed in the intestinal wall, the spermatheca, and the pharynx.

Its subcellular location is the cytoplasm. It is found in the cytoskeleton. Its function is as follows. Binds to actin and affects the structure of the cytoskeleton. At high concentrations, profilin prevents the polymerization of actin, whereas it enhances it at low concentrations. By binding to PIP2, it inhibits the formation of IP3 and DG. The protein is Profilin-2 (pfn-2) of Caenorhabditis elegans.